Here is a 190-residue protein sequence, read N- to C-terminus: MAVFEGTFTQTEPLRLAVVIGRFNDLVTTKLLAGCQDCLKRHGVDPDPHGNQVDYVWVPGSFEVPLVARQLALTHRYDAIICLGAVIRGQTPHFDYVSAEVSKGIAAASFQTGVPVIFGILTVDTMQQALERAGIKANHGWDYAMNALEMASLMRQLRSNVTDSYSQTQSLPAAFPNASIGKLTAESEEV.

Residues Phe-23, 61-63 (SFE), and 85-87 (AVI) each bind 5-amino-6-(D-ribitylamino)uracil. 90-91 (QT) contacts (2S)-2-hydroxy-3-oxobutyl phosphate. The Proton donor role is filled by His-93. Phe-118 lines the 5-amino-6-(D-ribitylamino)uracil pocket. Arg-132 provides a ligand contact to (2S)-2-hydroxy-3-oxobutyl phosphate.

It belongs to the DMRL synthase family.

It carries out the reaction (2S)-2-hydroxy-3-oxobutyl phosphate + 5-amino-6-(D-ribitylamino)uracil = 6,7-dimethyl-8-(1-D-ribityl)lumazine + phosphate + 2 H2O + H(+). It participates in cofactor biosynthesis; riboflavin biosynthesis; riboflavin from 2-hydroxy-3-oxobutyl phosphate and 5-amino-6-(D-ribitylamino)uracil: step 1/2. Catalyzes the formation of 6,7-dimethyl-8-ribityllumazine by condensation of 5-amino-6-(D-ribitylamino)uracil with 3,4-dihydroxy-2-butanone 4-phosphate. This is the penultimate step in the biosynthesis of riboflavin. In Nostoc sp. (strain PCC 7120 / SAG 25.82 / UTEX 2576), this protein is 6,7-dimethyl-8-ribityllumazine synthase.